The sequence spans 469 residues: MNPNQKIITIGSICMVVGIISLILQIGNIVSIWISHSIQTGNQNHTGTCNQSIITYKNSTWVNQTYVNISNTNVVAGKDTTSVILAGNSSLCPIRGWAIYSKDNGVRIGSKGDVFVIREPFISCSHLECRTFFLTQGALLNDKHSNGTVKDRSPYRALMSCPVGEAPSPYNSRFESVAWSASACHDGMGWLTIGISGPDDGAVAVLKYNGIITETIKSWRKEILRTQESECVCVNGSCFTIMTDGPSGGPASYKIFKIEKGKVTKSIELDAPNSHYEECSCYPDTSKVMCVCRDNWHGSNRPWVSFDQNLDYQMGYICSGVFGDNPRPKDGKGSCGPVYVDGANGVKGFSYRYGNGVWIGRTKSNSSRQGFEMIWDPNGWTETDSNFFMKQDVVAVTDWSGYSGSFVQHPELTGLDCMRPCFWVELIRGRPKENTIWTSGSSISFCGVNSDTVDWSWPDGAELPFTIDK.

Topologically, residues 1–6 (MNPNQK) are intravirion. A helical membrane pass occupies residues 7–27 (IITIGSICMVVGIISLILQIG). Positions 11–33 (GSICMVVGIISLILQIGNIVSIW) are involved in apical transport and lipid raft association. The Virion surface portion of the chain corresponds to 28–469 (NIVSIWISHS…GAELPFTIDK (442 aa)). Positions 36–90 (HSIQTGNQNHTGTCNQSIITYKNSTWVNQTYVNISNTNVVAGKDTTSVILAGNSS) are hypervariable stalk region. N-linked (GlcNAc...) asparagine; by host glycans are attached at residues asparagine 44, asparagine 50, asparagine 58, asparagine 63, asparagine 68, and asparagine 88. Residues 91 to 469 (LCPIRGWAIY…GAELPFTIDK (379 aa)) form a head of neuraminidase region. 8 disulfides stabilise this stretch: cysteine 92–cysteine 417, cysteine 124–cysteine 129, cysteine 184–cysteine 231, cysteine 233–cysteine 238, cysteine 279–cysteine 292, cysteine 281–cysteine 290, cysteine 318–cysteine 335, and cysteine 421–cysteine 446. Residue arginine 118 coordinates substrate. N-linked (GlcNAc...) asparagine; by host glycosylation is present at asparagine 146. The active-site Proton donor/acceptor is the aspartate 151. Arginine 152 serves as a coordination point for substrate. The N-linked (GlcNAc...) asparagine; by host glycan is linked to asparagine 235. 277–278 (EE) contributes to the substrate binding site. Position 293 (arginine 293) interacts with substrate. Positions 294, 298, 324, and 344 each coordinate Ca(2+). A glycan (N-linked (GlcNAc...) asparagine; by host) is linked at asparagine 365. Arginine 368 is a binding site for substrate. The active-site Nucleophile is tyrosine 402.

The protein belongs to the glycosyl hydrolase 34 family. Homotetramer. Ca(2+) is required as a cofactor. Post-translationally, N-glycosylated.

It localises to the virion membrane. Its subcellular location is the host apical cell membrane. It carries out the reaction Hydrolysis of alpha-(2-&gt;3)-, alpha-(2-&gt;6)-, alpha-(2-&gt;8)- glycosidic linkages of terminal sialic acid residues in oligosaccharides, glycoproteins, glycolipids, colominic acid and synthetic substrates.. Its activity is regulated as follows. Inhibited by the neuraminidase inhibitors zanamivir (Relenza) and oseltamivir (Tamiflu). These drugs interfere with the release of progeny virus from infected cells and are effective against all influenza strains. Resistance to neuraminidase inhibitors is quite rare. Catalyzes the removal of terminal sialic acid residues from viral and cellular glycoconjugates. Cleaves off the terminal sialic acids on the glycosylated HA during virus budding to facilitate virus release. Additionally helps virus spread through the circulation by further removing sialic acids from the cell surface. These cleavages prevent self-aggregation and ensure the efficient spread of the progeny virus from cell to cell. Otherwise, infection would be limited to one round of replication. Described as a receptor-destroying enzyme because it cleaves a terminal sialic acid from the cellular receptors. May facilitate viral invasion of the upper airways by cleaving the sialic acid moieties on the mucin of the airway epithelial cells. Likely to plays a role in the budding process through its association with lipid rafts during intracellular transport. May additionally display a raft-association independent effect on budding. Plays a role in the determination of host range restriction on replication and virulence. Sialidase activity in late endosome/lysosome traffic seems to enhance virus replication. The protein is Neuraminidase of Aves (Human).